A 556-amino-acid chain; its full sequence is Trigger factor (556 aa).

The region spanning G169–P255 is the PPIase FKBP-type domain. Positions V438–A452 are enriched in polar residues. Residues V438–K556 are disordered. Residues P461–A472 show a composition bias toward acidic residues. Low complexity-rich tracts occupy residues E486 to E503 and E511 to T526.

The protein belongs to the FKBP-type PPIase family. Tig subfamily.

It is found in the cytoplasm. It catalyses the reaction [protein]-peptidylproline (omega=180) = [protein]-peptidylproline (omega=0). Involved in protein export. Acts as a chaperone by maintaining the newly synthesized protein in an open conformation. Functions as a peptidyl-prolyl cis-trans isomerase. The protein is Trigger factor of Synechococcus sp. (strain JA-2-3B'a(2-13)) (Cyanobacteria bacterium Yellowstone B-Prime).